A 116-amino-acid chain; its full sequence is Large ribosomal subunit protein uL18 (116 aa).

It belongs to the universal ribosomal protein uL18 family. As to quaternary structure, part of the 50S ribosomal subunit; part of the 5S rRNA/L5/L18/L25 subcomplex. Contacts the 5S and 23S rRNAs.

Functionally, this is one of the proteins that bind and probably mediate the attachment of the 5S RNA into the large ribosomal subunit, where it forms part of the central protuberance. The polypeptide is Large ribosomal subunit protein uL18 (Shewanella piezotolerans (strain WP3 / JCM 13877)).